Consider the following 518-residue polypeptide: Ribonuclease Y (518 aa).

Residues 2-22 form a helical membrane-spanning segment; the sequence is GSIIISALLALVIGAVVGFFV. A KH domain is found at 208 to 271; sequence TVSVVNLPND…ETARIALDKL (64 aa). One can recognise an HD domain in the interval 334-427; it reads VLKHSVEVAF…VAAADALSAA (94 aa).

This sequence belongs to the RNase Y family.

The protein resides in the cell membrane. In terms of biological role, endoribonuclease that initiates mRNA decay. The protein is Ribonuclease Y of Geobacillus kaustophilus (strain HTA426).